A 971-amino-acid polypeptide reads, in one-letter code: Unconventional myosin-XIX (971 aa).

The tract at residues 1–25 (MSRPLSKNTEREPKQINGHQNNLSN) is disordered. The 708-residue stretch at 48-755 (HLYDDLTKVN…MVELLEERRL (708 aa)) folds into the Myosin motor domain. 145-152 (GESGAGKT) is a binding site for ATP. The segment at 611-633 (LESLMQILHSTTPHYIRCIKPNV) is actin-binding. IQ domains lie at 758–787 (ISSKAMCIQCCWRSYRQRKLAKQSKAATTI) and 780–809 (QSKAATTIQAAVKGWLTKKYIKRMHSAATV). The segment at 826–971 (AAELDDSTED…FNEILLEKTV (146 aa)) is myMOMA region.

Belongs to the TRAFAC class myosin-kinesin ATPase superfamily. Myosin family. In terms of assembly, myosin is a hexamer of 2 heavy chains and 4 light chains.

Its subcellular location is the mitochondrion outer membrane. It is found in the cytoplasm. It localises to the cytoskeleton. Actin-based motor molecule with ATPase activity that localizes to the mitochondrion outer membrane. Motor protein that moves towards the plus-end of actin filaments. Required for mitochondrial inheritance during mitosis. May be involved in mitochondrial transport or positioning. This Xenopus laevis (African clawed frog) protein is Unconventional myosin-XIX.